The primary structure comprises 338 residues: Fructose-1,6-bisphosphatase class 1 1 (338 aa).

4 residues coordinate Mg(2+): Glu91, Asp113, Leu115, and Asp116. Substrate is bound by residues 116–119, Asn208, and Lys274; that span reads DGSS. Glu280 provides a ligand contact to Mg(2+).

It belongs to the FBPase class 1 family. In terms of assembly, homotetramer. The cofactor is Mg(2+).

Its subcellular location is the cytoplasm. It catalyses the reaction beta-D-fructose 1,6-bisphosphate + H2O = beta-D-fructose 6-phosphate + phosphate. It functions in the pathway carbohydrate biosynthesis; gluconeogenesis. The chain is Fructose-1,6-bisphosphatase class 1 1 from Cupriavidus necator (strain ATCC 17699 / DSM 428 / KCTC 22496 / NCIMB 10442 / H16 / Stanier 337) (Ralstonia eutropha).